A 310-amino-acid chain; its full sequence is Probable cell division protein WhiA (310 aa).

The segment at residues 274–308 (SLKELGTLVPGGPISKSGINHRLRKINQFAEQLQK) is a DNA-binding region (H-T-H motif).

It belongs to the WhiA family.

Its function is as follows. Involved in cell division and chromosome segregation. In Lactiplantibacillus plantarum (strain ATCC BAA-793 / NCIMB 8826 / WCFS1) (Lactobacillus plantarum), this protein is Probable cell division protein WhiA.